A 117-amino-acid polypeptide reads, in one-letter code: Large ribosomal subunit protein bL20 (117 aa).

It belongs to the bacterial ribosomal protein bL20 family.

In terms of biological role, binds directly to 23S ribosomal RNA and is necessary for the in vitro assembly process of the 50S ribosomal subunit. It is not involved in the protein synthesizing functions of that subunit. This chain is Large ribosomal subunit protein bL20, found in Leptospira biflexa serovar Patoc (strain Patoc 1 / Ames).